Reading from the N-terminus, the 338-residue chain is uncharacterized protein (338 aa).

A TNase-like domain is found at 144 to 321 (HTLPVDVKAV…RAARVGLWAS (178 aa)). Residues Arg228, Glu236, and Arg270 contribute to the active site.

This is an uncharacterized protein from Capnoides sempervirens (Rock-harlequin).